The following is a 45-amino-acid chain: Bomanin Short 1 (45 aa).

An N-terminal signal peptide occupies residues 1 to 20; sequence MKFFSVVTVFVLGLLAVANA. A propeptide spans 21–27 (removed by a dipeptidylpeptidase); that stretch reads VPLSPDP. C36 and C39 are disulfide-bonded. G43 carries the post-translational modification Glycine amide.

As to expression, hemolymph (at protein level).

The protein localises to the secreted. Its function is as follows. Secreted immune-induced peptide induced by Toll signaling. Has a role in resistance to bacterial and fungal infections. Has no activity against the fungus C.glabrata in vitro. This chain is Bomanin Short 1, found in Drosophila melanogaster (Fruit fly).